We begin with the raw amino-acid sequence, 560 residues long: Synaptotagmin-5 (560 aa).

Residues 2–22 (GFIVGVVIGLLVGIAIIIGFV) traverse the membrane as a helical segment. The SMP-LTD domain maps to 67-249 (ERQKLTWLNH…WPVRKVIPII (183 aa)). A phospholipid binding region spans residues 227–523 (EETIRDAVED…YIGRCILTLT (297 aa)). C2 domains lie at 243–364 (RKVI…DVWL) and 417–535 (TTDE…KDWY). The Ca(2+) site is built by Asp278, Asp284, Asp334, Glu336, Asp451, Asp457, Asp506, Asp508, and Asp513.

The protein belongs to the synaptotagmin family. Ca(2+) is required as a cofactor.

It localises to the membrane. Functionally, may be involved in membrane trafficking. This chain is Synaptotagmin-5 (SYT5), found in Arabidopsis thaliana (Mouse-ear cress).